Here is a 48-residue protein sequence, read N- to C-terminus: Light-harvesting polypeptide B-885 beta-2 chain (48 aa).

Topologically, residues 1 to 20 (AEDRKSLSGLTEQEAQEFGT) are cytoplasmic. A helical membrane pass occupies residues 21 to 43 (LYTQGVAFVAVIAIVAHALVWAW). H37 contacts a bacteriochlorophyll. At 44 to 48 (RPWLQ) the chain is on the periplasmic side.

The protein belongs to the antenna complex beta subunit family. In terms of assembly, the core complex is formed by different alpha and beta chains, binding bacteriochlorophyll molecules, and arranged most probably in tetrameric structures disposed around the reaction center. The non-pigmented gamma chains may constitute additional components.

It localises to the cell inner membrane. Antenna complexes are light-harvesting systems, which transfer the excitation energy to the reaction centers. The polypeptide is Light-harvesting polypeptide B-885 beta-2 chain (Rhodocyclus tenuis (Rhodospirillum tenue)).